The primary structure comprises 159 residues: SsrA-binding protein (159 aa).

This sequence belongs to the SmpB family.

The protein resides in the cytoplasm. Its function is as follows. Required for rescue of stalled ribosomes mediated by trans-translation. Binds to transfer-messenger RNA (tmRNA), required for stable association of tmRNA with ribosomes. tmRNA and SmpB together mimic tRNA shape, replacing the anticodon stem-loop with SmpB. tmRNA is encoded by the ssrA gene; the 2 termini fold to resemble tRNA(Ala) and it encodes a 'tag peptide', a short internal open reading frame. During trans-translation Ala-aminoacylated tmRNA acts like a tRNA, entering the A-site of stalled ribosomes, displacing the stalled mRNA. The ribosome then switches to translate the ORF on the tmRNA; the nascent peptide is terminated with the 'tag peptide' encoded by the tmRNA and targeted for degradation. The ribosome is freed to recommence translation, which seems to be the essential function of trans-translation. The protein is SsrA-binding protein of Coxiella burnetii (strain RSA 493 / Nine Mile phase I).